A 523-amino-acid chain; its full sequence is Cytochrome P450 monooxygenase bsc5 (523 aa).

A helical membrane pass occupies residues 16 to 36 (MQLHWTVLGLLPVLFIAILGP). N178, N281, and N403 each carry an N-linked (GlcNAc...) asparagine glycan. Residue C459 participates in heme binding.

The protein belongs to the cytochrome P450 family. Heme serves as cofactor.

It is found in the membrane. Its pathway is mycotoxin biosynthesis. Its function is as follows. Cytochrome P450 monooxygenase; part of the gene cluster that mediates the biosynthesis of the diterpene glucoside brassicicene C. In the first step of the brassicicene C biosynthesis, the bifunctional diterpene synthase bsc8 that possesses both prenyl transferase and terpene cyclase activity, converts isopentenyl diphosphate and dimethylallyl diphosphate into geranylgeranyl diphosphate (GGDP) that is further converted into fusicocca-2,10(14)-diene, the first precursor for brassicicene C. Fusicocca-2,10(14)-diene is then substrate of cytochrome P450 monooxygenase bsc1 for hydroxylation at the C-8 position. Oxidation at C-16 position to aldehyde is then catalyzed by the cytochrome P450 monooyxygenase bsc7, yielding fusicocca-2,10(14)-diene-8-beta,16-diol. Follows the isomerization of the double bond and reduction of aldehyde to alcohol catalyzed by the short-chain dehydrogenase/reductase bsc3 to yield the diol compound fusicocca-1,10(14)-diene-8 beta,16-diol. The next step is the oxidation at the C-3 position of fusicocca-2,10(14)-diene-8-beta,16-diol catalyzed by the alpha-ketoglutarate dependent dioxygenase bsc9, to produce a triol compound. Methylation of the hydroxy group at position 16 is performed by the methyltransferase bsc6. 16-O-methylation is followed by oxidation at the C-13 position to ketone and an alkyl shift of the methyl group leads to brassicicene C. Although the probable acetyltransferase bsc4 is included in the gene cluster, no acetylation reactions are necessary for brassicicene C biosynthesis. However, the fact that brassicicene E, which is a structurally related compound having an acetoxy group at position 12, was previously isolated from another strain of A.brassicicola suggests that the ATCC 96836 strain might also produce a small amount of brassicicene E. The polypeptide is Cytochrome P450 monooxygenase bsc5 (Alternaria brassicicola (Dark leaf spot agent)).